The following is a 305-amino-acid chain: tRNA pseudouridine synthase B (305 aa).

The active-site Nucleophile is Asp-39.

The protein belongs to the pseudouridine synthase TruB family. Type 1 subfamily.

It catalyses the reaction uridine(55) in tRNA = pseudouridine(55) in tRNA. Functionally, responsible for synthesis of pseudouridine from uracil-55 in the psi GC loop of transfer RNAs. The chain is tRNA pseudouridine synthase B from Staphylococcus aureus (strain MW2).